A 368-amino-acid polypeptide reads, in one-letter code: DNA integrity scanning protein DisA (368 aa).

The region spanning 15 to 153 (DERLRATLAA…DGRRHVLDEP (139 aa)) is the DAC domain. ATP is bound by residues G82, L100, and 113 to 117 (TRHRS). The segment at 101-121 (QPDPSIPTNESGTRHRSAERT) is disordered. A compositionally biased stretch (basic and acidic residues) spans 112 to 121 (GTRHRSAERT).

The protein belongs to the DisA family. Homooctamer. It depends on Mg(2+) as a cofactor.

It carries out the reaction 2 ATP = 3',3'-c-di-AMP + 2 diphosphate. Participates in a DNA-damage check-point. DisA forms globular foci that rapidly scan along the chromosomes searching for lesions. In terms of biological role, also has diadenylate cyclase activity, catalyzing the condensation of 2 ATP molecules into cyclic di-AMP (c-di-AMP). c-di-AMP likely acts as a signaling molecule that may couple DNA integrity with a cellular process. The polypeptide is DNA integrity scanning protein DisA (Acidothermus cellulolyticus (strain ATCC 43068 / DSM 8971 / 11B)).